The primary structure comprises 530 residues: Alpha-(1,3)-fucosyltransferase 4 (530 aa).

Disordered stretches follow at residues 1-48 (MRRL…RAVP) and 66-113 (HLGG…TPAD). The Cytoplasmic portion of the chain corresponds to 1–147 (MRRLWGAARK…GGRRRWRRGR (147 aa)). Residues 88-106 (ASGERQRRLEPQLQHESRC) are compositionally biased toward basic and acidic residues. A helical; Signal-anchor for type II membrane protein membrane pass occupies residues 148 to 172 (GLPWTVCVLAAAGLTCTALITYACW). Topologically, residues 173–530 (GQLPPLPWAS…IRNLASWFER (358 aa)) are lumenal. Asn-216 and Asn-315 each carry an N-linked (GlcNAc...) asparagine glycan.

It belongs to the glycosyltransferase 10 family.

The protein localises to the golgi apparatus. It is found in the golgi stack membrane. The catalysed reaction is a beta-D-galactosyl-(1-&gt;4)-N-acetyl-beta-D-glucosaminyl derivative + GDP-beta-L-fucose = a beta-D-galactosyl-(1-&gt;4)-[alpha-L-fucosyl-(1-&gt;3)]-N-acetyl-beta-D-glucosaminyl derivative + GDP + H(+). It catalyses the reaction an N-acetyl-alpha-neuraminyl-(2-&gt;3)-beta-D-galactosyl-(1-&gt;4)-N-acetyl-beta-D-glucosaminyl derivative + GDP-beta-L-fucose = an alpha-Neu5Ac-(2-&gt;3)-beta-D-Gal-(1-&gt;4)-[alpha-L-Fuc-(1-&gt;3)]-beta-D-GlcNAc derivative + GDP + H(+). The enzyme catalyses an alpha-Neu5Ac-(2-&gt;3)-beta-D-Gal-(1-&gt;4)-beta-D-GlcNAc-(1-&gt;3)-beta-D-Gal-(1-&gt;4)-beta-D-GlcNAc derivative + GDP-beta-L-fucose = an alpha-Neu5Ac-(2-&gt;3)-beta-D-Gal-(1-&gt;4)-beta-D-GlcNAc-(1-&gt;3)-beta-D-Gal-(1-&gt;4)-[alpha-L-Fuc-(1-&gt;3)]-beta-D-GlcNAc derivative + GDP + H(+). It carries out the reaction an alpha-Neu5Ac-(2-&gt;3)-beta-D-Gal-(1-&gt;4)-beta-D-GlcNAc6S derivative + GDP-beta-L-fucose = an alpha-Neu5Ac-(2-&gt;3)-beta-D-Gal-(1-&gt;4)-[alpha-L-Fuc-(1-&gt;3)]-beta-D-GlcNAc6S derivative + GDP + H(+). Its pathway is protein modification; protein glycosylation. Its function is as follows. Catalyzes alpha(1-&gt;3) linkage of fucosyl moiety transferred from GDP-beta-L-fucose to N-acetyl glucosamine (GlcNAc) within type 2 lactosamine (LacNAc, Gal-beta(1-&gt;4)GlcNAc) glycan attached to N- or O-linked glycoproteins. Robustly fucosylates nonsialylated distal LacNAc unit of the polylactosamine chain to form Lewis X antigen (CD15), a glycan determinant known to mediate important cellular functions in development and immunity. Fucosylates with lower efficiency sialylated LacNAc acceptors to form sialyl Lewis X and 6-sulfo sialyl Lewis X determinants that serve as recognition epitopes for C-type lectins. Together with FUT7 contributes to SELE, SELL and SELP selectin ligand biosynthesis and selectin-dependent lymphocyte homing, leukocyte migration and blood leukocyte homeostasis. In a cell type specific manner, may also fucosylate the internal LacNAc unit of the polylactosamine chain to form VIM-2 antigen that serves as recognition epitope for SELE. This chain is Alpha-(1,3)-fucosyltransferase 4 (FUT4), found in Pan troglodytes (Chimpanzee).